Reading from the N-terminus, the 411-residue chain is Tubulin beta-2 chain (411 aa).

Residues glutamate 37, serine 106, glycine 110, threonine 111, glycine 112, asparagine 172, and asparagine 194 each contribute to the GTP site. Residue glutamate 37 coordinates Mg(2+). A disordered region spans residues 392-411 (QYQDATAEPEGXYEEDYDEA). Acidic residues predominate over residues 402–411 (GXYEEDYDEA).

Belongs to the tubulin family. Dimer of alpha and beta chains. A typical microtubule is a hollow water-filled tube with an outer diameter of 25 nm and an inner diameter of 15 nM. Alpha-beta heterodimers associate head-to-tail to form protofilaments running lengthwise along the microtubule wall with the beta-tubulin subunit facing the microtubule plus end conferring a structural polarity. Microtubules usually have 13 protofilaments but different protofilament numbers can be found in some organisms and specialized cells. It depends on Mg(2+) as a cofactor.

It is found in the cytoplasm. The protein resides in the cytoskeleton. Tubulin is the major constituent of microtubules, a cylinder consisting of laterally associated linear protofilaments composed of alpha- and beta-tubulin heterodimers. Microtubules grow by the addition of GTP-tubulin dimers to the microtubule end, where a stabilizing cap forms. Below the cap, tubulin dimers are in GDP-bound state, owing to GTPase activity of alpha-tubulin. This Anemia phyllitidis (Fern) protein is Tubulin beta-2 chain (TUBB2).